We begin with the raw amino-acid sequence, 64 residues long: Large ribosomal subunit protein bL35 (64 aa).

The protein belongs to the bacterial ribosomal protein bL35 family.

The sequence is that of Large ribosomal subunit protein bL35 from Lactiplantibacillus plantarum (strain ATCC BAA-793 / NCIMB 8826 / WCFS1) (Lactobacillus plantarum).